A 569-amino-acid polypeptide reads, in one-letter code: Archaeosine synthase (569 aa).

The region spanning 495-569 (SGGKDINYIE…ALVNIRNVKS (75 aa)) is the PUA domain.

Belongs to the archaeosine synthase type 1 family. Homodimer.

The enzyme catalyses 7-cyano-7-carbaguanosine(15) in tRNA + L-glutamine + H2O = archaeosine(15) in tRNA + L-glutamate. It functions in the pathway tRNA modification; archaeosine-tRNA biosynthesis. Its function is as follows. Is responsible for the final step in the biosynthesis of archaeosine, a modified nucleoside present in the dihydrouridine loop (D-loop) of archaeal tRNA. Catalyzes the conversion of 7-cyano-7-deazaguanine (preQ0)-modified tRNA to archaeosine-tRNA, transforming a nitrile group to a formamidine group. Can use either glutamine, asparagine or ammonium as amino donor. The polypeptide is Archaeosine synthase (Methanocaldococcus jannaschii (strain ATCC 43067 / DSM 2661 / JAL-1 / JCM 10045 / NBRC 100440) (Methanococcus jannaschii)).